Reading from the N-terminus, the 303-residue chain is L(+)-tartrate dehydratase subunit alpha (303 aa).

3 residues coordinate iron-sulfur cluster: C71, C190, and C277.

It belongs to the class-I fumarase family. As to quaternary structure, tetramer of two alpha and two beta subunits. It depends on iron-sulfur cluster as a cofactor.

It carries out the reaction (2R,3R)-tartrate = oxaloacetate + H2O. In Escherichia coli O6:K15:H31 (strain 536 / UPEC), this protein is L(+)-tartrate dehydratase subunit alpha (ttdA).